The sequence spans 686 residues: X-linked interleukin-1 receptor accessory protein-like 2 (686 aa).

The first 16 residues, 1–16 (MKPPFLLALVVCSVVS), serve as a signal peptide directing secretion. Topologically, residues 17-354 (TNLKMVSKRN…LLRKKDLIYK (338 aa)) are extracellular. The 115-residue stretch at 18-132 (NLKMVSKRNS…YCMKVSMSLT (115 aa)) folds into the Ig-like C2-type 1 domain. The cysteines at positions 53 and 116 are disulfide-linked. Asn-63, Asn-120, Asn-136, Asn-211, and Asn-328 each carry an N-linked (GlcNAc...) asparagine glycan. Ig-like C2-type domains lie at 141–232 (CYNS…LKVT) and 239–347 (PPKP…VLLR). Cystine bridges form between Cys-162/Cys-214 and Cys-265/Cys-331. A helical transmembrane segment spans residues 355 to 375 (IELAGGLGAIFLLLVLLVVIY). Topologically, residues 376-686 (KCYNIELMLF…KELSFTSDIW (311 aa)) are cytoplasmic. One can recognise a TIR domain in the interval 400–556 (KEYDAYLSYT…KFWKHLVYEM (157 aa)). Glu-488 is a catalytic residue.

This sequence belongs to the interleukin-1 receptor family. In terms of tissue distribution, detected at low levels in fetal and adult brain, in particular in the frontal lobe, temporal lobe and cerebellum. Detected at very low levels in skin, liver, fetal ovary and in placenta.

The protein localises to the membrane. It carries out the reaction NAD(+) + H2O = ADP-D-ribose + nicotinamide + H(+). This chain is X-linked interleukin-1 receptor accessory protein-like 2 (IL1RAPL2), found in Homo sapiens (Human).